The following is a 274-amino-acid chain: Orotidine 5'-phosphate decarboxylase (274 aa).

Substrate-binding positions include Asp-40, 62-64, 93-102, Tyr-227, and Arg-245; these read KTH and DRKFVDIGNT. Lys-95 functions as the Proton donor in the catalytic mechanism.

Belongs to the OMP decarboxylase family.

The catalysed reaction is orotidine 5'-phosphate + H(+) = UMP + CO2. It functions in the pathway pyrimidine metabolism; UMP biosynthesis via de novo pathway; UMP from orotate: step 2/2. In Coccidioides immitis (strain RS) (Valley fever fungus), this protein is Orotidine 5'-phosphate decarboxylase (URA3).